A 153-amino-acid polypeptide reads, in one-letter code: ORM1-like protein 2 (153 aa).

Residues 1–21 lie on the Cytoplasmic side of the membrane; it reads MNVGVAHSEVNPNTRVMSSRG. The next 2 membrane-spanning stretches (helical) occupy residues 22 to 42 and 43 to 63; these read IWLA…SIPF and FSIP…MYLL. Residues 64–105 are Cytoplasmic-facing; sequence LHTVKGTPFETPDQGKDRLLTHWEQIDYGMQCTSSRKFLSIS. The chain crosses the membrane as a helical span at residues 106-126; it reads PVVLYLLTSFYIKYDPAHFMI. Topologically, residues 127-153 are extracellular; that stretch reads NTASLLSVLLPKLPQFHGVRVFGINKY.

This sequence belongs to the ORM family. Ceramide-sensitive subunit of the serine palmitoyltransferase (SPT) complex, which is also composed of SPTLC1, SPTLC2/3 and SPTSSA/B.

It is found in the endoplasmic reticulum membrane. Plays an essential role in the homeostatic regulation of sphingolipid de novo biosynthesis by modulating the activity of the serine palmitoyltransferase (SPT) in response to ceramide levels. When complexed to SPT, the binding of ceramides to its N-terminus stabilizes a conformation that block SPT substrate entry, hence preventing SPT catalytic activity. Through this mechanism, maintains ceramide levels at sufficient concentrations for the production of complex sphingolipids, but which prevents the accumulation of ceramides to levels that trigger apoptosis. This chain is ORM1-like protein 2 (ORMDL2), found in Gallus gallus (Chicken).